The sequence spans 220 residues: MHNYLDNIMPDFSIENEILKLKNNKECIIVGVDEVGYGSLAGPVVSAAVFFPNYNNETTQDINDSKKLTPKTRQKIYNKIITRVKWSIGFAHIFEIDEYNILNATHIAMKRALTGLNAHIDIDYVIIDGNKIPNIPWNAQAIIGGDTISTSIAAASIIAKVTRDRLMETLHIQYPQYNWNKNKGYGTKDHITSLYKYGKTIHHRNTFTPISKISYMFKNS.

In terms of domain architecture, RNase H type-2 spans 27–220 (CIIVGVDEVG…SKISYMFKNS (194 aa)). 3 residues coordinate a divalent metal cation: Asp33, Glu34, and Asp128.

It belongs to the RNase HII family. Requires Mn(2+) as cofactor. Mg(2+) serves as cofactor.

Its subcellular location is the cytoplasm. It catalyses the reaction Endonucleolytic cleavage to 5'-phosphomonoester.. Endonuclease that specifically degrades the RNA of RNA-DNA hybrids. This Ehrlichia ruminantium (strain Gardel) protein is Ribonuclease HII.